A 167-amino-acid chain; its full sequence is Protein archease (167 aa).

Alanine 2 carries the N-acetylalanine modification. Residues aspartate 39, aspartate 166, and isoleucine 167 each coordinate Ca(2+).

The protein belongs to the archease family. In terms of assembly, component of the tRNA-splicing ligase complex.

Its function is as follows. Component of the tRNA-splicing ligase complex required to facilitate the enzymatic turnover of catalytic subunit RTCB. Together with DDX1, acts by facilitating the guanylylation of RTCB, a key intermediate step in tRNA ligation. The sequence is that of Protein archease (ZBTB8OS) from Bos taurus (Bovine).